A 321-amino-acid polypeptide reads, in one-letter code: Ribosomal RNA small subunit methyltransferase H (321 aa).

S-adenosyl-L-methionine is bound by residues 40 to 42 (GGH), Asp-60, Phe-84, Asp-106, and Gln-113.

It belongs to the methyltransferase superfamily. RsmH family.

The protein resides in the cytoplasm. It catalyses the reaction cytidine(1402) in 16S rRNA + S-adenosyl-L-methionine = N(4)-methylcytidine(1402) in 16S rRNA + S-adenosyl-L-homocysteine + H(+). Specifically methylates the N4 position of cytidine in position 1402 (C1402) of 16S rRNA. The chain is Ribosomal RNA small subunit methyltransferase H from Haemophilus influenzae (strain PittEE).